Reading from the N-terminus, the 71-residue chain is MAIYKVFFQDDKSEVIVRENTHTIYVEGNSEEEVRKYLKNRDYNIEFITKLEGAHLEYEQQSEDYKVEHIQ.

The protein belongs to the RNA polymerase subunit epsilon family. As to quaternary structure, RNAP is composed of a core of 2 alpha, a beta and a beta' subunit. The core is associated with a delta subunit, and at least one of epsilon or omega. When a sigma factor is associated with the core the holoenzyme is formed, which can initiate transcription.

It carries out the reaction RNA(n) + a ribonucleoside 5'-triphosphate = RNA(n+1) + diphosphate. In terms of biological role, a non-essential component of RNA polymerase (RNAP). This Staphylococcus carnosus (strain TM300) protein is DNA-directed RNA polymerase subunit epsilon.